A 633-amino-acid polypeptide reads, in one-letter code: Chaperone protein DnaK (633 aa).

Residue Thr-198 is modified to Phosphothreonine; by autocatalysis.

Belongs to the heat shock protein 70 family.

Acts as a chaperone. The sequence is that of Chaperone protein DnaK from Rhodopseudomonas palustris (strain HaA2).